Consider the following 520-residue polypeptide: Flavin-dependent halogenase radH (520 aa).

3 residues coordinate FAD: G14, A17, and E47. Chloride is bound by residues S330 and G331.

It belongs to the flavin-dependent halogenase family.

It functions in the pathway secondary metabolite biosynthesis. In terms of biological role, non-heme halogenase; part of the gene cluster that mediates the biosynthesis of radicicol, a resorcylic acid lactone (RAL) that irreversibly inhibits the HSP90 molecular chaperone, an important target for cancer chemotherapy. The cluster encodes only two apparent post-PKS enzymes, a cytochrome P450 monooxygenase (radP) and a non-heme halogenase (radH) that introduce the epoxide and the chlorine, respectively. If this cluster includes all the genes required for radicicol biosynthesis, the remaining structural features of radicicol are presumably generated by the PKSs rads1 and rads2. The C-2' ketone could arise if the R-PKS rads1 and NR-PKS rads2 each carry out four iterations, in contrast to the five iteration-three iteration split for the hypothemycin PKSs. The origin of the cis 5',6' double bond is not known. The radicicol R-PKS rads1 ER domain may catalyze either double bond isomerization or reduction in the third iteration. The chain is Flavin-dependent halogenase radH from Floropilus chiversii (Chaetomium chiversii).